The chain runs to 165 residues: Putative protein FAM86C1P (165 aa).

This sequence belongs to the class I-like SAM-binding methyltransferase superfamily. EEF2KMT family. Interacts with EEF2KMT.

The protein is Putative protein FAM86C1P of Homo sapiens (Human).